Reading from the N-terminus, the 618-residue chain is Cell pattern formation-associated protein STU1 (618 aa).

Positions 13 to 28 (MSAGPTQQPPTVTSYN) are enriched in polar residues. The segment at 13–105 (MSAGPTQQPP…FDTSGQIAPP (93 aa)) is disordered. The span at 48-59 (YGGYPYTNGMPS) shows a compositional bias: low complexity. Over residues 91–101 (NQYSGFDTSGQ) the composition is skewed to polar residues. In terms of domain architecture, HTH APSES-type spans 110–216 (RVTATLWEDE…HNISALLYHP (107 aa)). The segment at residues 144–165 (GTKLLNVAGMTRGRRDGILKSE) is a DNA-binding region (H-T-H motif). 2 disordered regions span residues 229-355 (AERR…YDGS) and 390-618 (SEMG…SRRR). Composition is skewed to polar residues over residues 256–266 (MSQNGSQSLSG), 284–298 (TSAS…SDSF), 305–326 (AMSN…TRSM), and 336–355 (GSTL…YDGS). Basic and acidic residues predominate over residues 438–451 (DHEHDPEYTHDSRT). Polar residues predominate over residues 452 to 476 (YDNSQSQYNYTAPPVSSISSEQAHV). Positions 494-512 (PRSAAAPQAYYQQAYSTSP) are enriched in low complexity. A compositionally biased stretch (polar residues) spans 513–563 (RSATHQSTSNLYNVMSNDRGSTTNGSANGDVYSQSTDLSNGYATPVTNGNA). The segment at 566-588 (KRGRDDDDDRSSSSGQMDLKRRK) is nuclear localization domain.

It belongs to the EFG1/PHD1/stuA family.

The protein localises to the nucleus. Functionally, transcription factor that regulates asexual reproduction. Binds the StuA-response elements (StRE) with the consensus sequence 5'-(A/T)CGCG(T/A)N(A/C)-3' at the promoters of target genes. Required for appressorium-mediated infection of rice leaves due to its involvement in the mobilization of lipids and glycogen. This is Cell pattern formation-associated protein STU1 from Pyricularia oryzae (strain 70-15 / ATCC MYA-4617 / FGSC 8958) (Rice blast fungus).